Consider the following 265-residue polypeptide: Glutamate racemase (265 aa).

Residues 12-13 and 44-45 contribute to the substrate site; these read DS and YG. The active-site Proton donor/acceptor is the C75. 76–77 is a substrate binding site; it reads NT. The active-site Proton donor/acceptor is C186. 187 to 188 serves as a coordination point for substrate; that stretch reads TH.

The protein belongs to the aspartate/glutamate racemases family.

It catalyses the reaction L-glutamate = D-glutamate. It participates in cell wall biogenesis; peptidoglycan biosynthesis. Provides the (R)-glutamate required for cell wall biosynthesis. The polypeptide is Glutamate racemase (Pseudomonas putida (strain W619)).